A 688-amino-acid polypeptide reads, in one-letter code: Glycine--tRNA ligase beta subunit (688 aa).

Belongs to the class-II aminoacyl-tRNA synthetase family. As to quaternary structure, tetramer of two alpha and two beta subunits.

The protein localises to the cytoplasm. It carries out the reaction tRNA(Gly) + glycine + ATP = glycyl-tRNA(Gly) + AMP + diphosphate. The protein is Glycine--tRNA ligase beta subunit of Shewanella sp. (strain MR-7).